The sequence spans 161 residues: Nucleotide-binding protein AZOSEA28950 (161 aa).

The protein belongs to the YajQ family.

In terms of biological role, nucleotide-binding protein. This Aromatoleum aromaticum (strain DSM 19018 / LMG 30748 / EbN1) (Azoarcus sp. (strain EbN1)) protein is Nucleotide-binding protein AZOSEA28950.